The sequence spans 293 residues: Bifunctional protein FolD (293 aa).

NADP(+) is bound by residues 166–168 (GAS) and Ile-232.

The protein belongs to the tetrahydrofolate dehydrogenase/cyclohydrolase family. As to quaternary structure, homodimer.

The catalysed reaction is (6R)-5,10-methylene-5,6,7,8-tetrahydrofolate + NADP(+) = (6R)-5,10-methenyltetrahydrofolate + NADPH. It carries out the reaction (6R)-5,10-methenyltetrahydrofolate + H2O = (6R)-10-formyltetrahydrofolate + H(+). It participates in one-carbon metabolism; tetrahydrofolate interconversion. Its function is as follows. Catalyzes the oxidation of 5,10-methylenetetrahydrofolate to 5,10-methenyltetrahydrofolate and then the hydrolysis of 5,10-methenyltetrahydrofolate to 10-formyltetrahydrofolate. This chain is Bifunctional protein FolD, found in Yersinia enterocolitica serotype O:8 / biotype 1B (strain NCTC 13174 / 8081).